The chain runs to 166 residues: Phosphopantetheine adenylyltransferase (166 aa).

A substrate-binding site is contributed by T14. ATP-binding positions include 14–15 (TF) and H22. Residues K46, L78, and R92 each contribute to the substrate site. ATP-binding positions include 93–95 (GLR), E103, and 128–134 (WMYLSSS).

The protein belongs to the bacterial CoaD family. In terms of assembly, homohexamer. The cofactor is Mg(2+).

Its subcellular location is the cytoplasm. It carries out the reaction (R)-4'-phosphopantetheine + ATP + H(+) = 3'-dephospho-CoA + diphosphate. The protein operates within cofactor biosynthesis; coenzyme A biosynthesis; CoA from (R)-pantothenate: step 4/5. Functionally, reversibly transfers an adenylyl group from ATP to 4'-phosphopantetheine, yielding dephospho-CoA (dPCoA) and pyrophosphate. The polypeptide is Phosphopantetheine adenylyltransferase (Maridesulfovibrio salexigens (strain ATCC 14822 / DSM 2638 / NCIMB 8403 / VKM B-1763) (Desulfovibrio salexigens)).